Reading from the N-terminus, the 389-residue chain is Phosphopentomutase (389 aa).

6 residues coordinate Mn(2+): Asp-9, Asp-282, His-287, Asp-323, His-324, and His-335.

It belongs to the phosphopentomutase family. Mn(2+) serves as cofactor.

It localises to the cytoplasm. The catalysed reaction is 2-deoxy-alpha-D-ribose 1-phosphate = 2-deoxy-D-ribose 5-phosphate. It catalyses the reaction alpha-D-ribose 1-phosphate = D-ribose 5-phosphate. Its pathway is carbohydrate degradation; 2-deoxy-D-ribose 1-phosphate degradation; D-glyceraldehyde 3-phosphate and acetaldehyde from 2-deoxy-alpha-D-ribose 1-phosphate: step 1/2. Isomerase that catalyzes the conversion of deoxy-ribose 1-phosphate (dRib-1-P) and ribose 1-phosphate (Rib-1-P) to deoxy-ribose 5-phosphate (dRib-5-P) and ribose 5-phosphate (Rib-5-P), respectively. The polypeptide is Phosphopentomutase (Kosmotoga olearia (strain ATCC BAA-1733 / DSM 21960 / TBF 19.5.1)).